The primary structure comprises 446 residues: Transcriptional regulator STERILE APETALA (446 aa).

Positions 1–10 are enriched in low complexity; that stretch reads MSTSSSSSDN. The disordered stretch occupies residues 1-32; the sequence is MSTSSSSSDNGAGGSGGVFEAPSPSRPRRGAN.

In terms of tissue distribution, expressed in inflorescence and floral meristems, young floral organ primordia, and later in ovule primordia.

It localises to the nucleus. Transcriptional regulator involved in the specification of floral identity. Acts as A class cadastral protein by repressing the C class floral homeotic gene AGAMOUS in the external flower organs in association with APETALA2 and other repressors. Is required to maintain floral meristem identity in concert with AGAMOUS. Also interacts with APETALA2 to ensure the normal development of ovule. This chain is Transcriptional regulator STERILE APETALA (SAP), found in Arabidopsis thaliana (Mouse-ear cress).